The chain runs to 301 residues: Acetylglutamate kinase (301 aa).

Residues Gly68–Gly69, Arg90, and Asn195 contribute to the substrate site.

The protein belongs to the acetylglutamate kinase family. ArgB subfamily.

It localises to the cytoplasm. The enzyme catalyses N-acetyl-L-glutamate + ATP = N-acetyl-L-glutamyl 5-phosphate + ADP. Its pathway is amino-acid biosynthesis; L-arginine biosynthesis; N(2)-acetyl-L-ornithine from L-glutamate: step 2/4. Functionally, catalyzes the ATP-dependent phosphorylation of N-acetyl-L-glutamate. The chain is Acetylglutamate kinase from Pseudomonas putida (strain GB-1).